Reading from the N-terminus, the 212-residue chain is Large ribosomal subunit protein uL3 (212 aa).

Position 152 is an N5-methylglutamine (Q152).

The protein belongs to the universal ribosomal protein uL3 family. As to quaternary structure, part of the 50S ribosomal subunit. Forms a cluster with proteins L14 and L19. In terms of processing, methylated by PrmB.

One of the primary rRNA binding proteins, it binds directly near the 3'-end of the 23S rRNA, where it nucleates assembly of the 50S subunit. The sequence is that of Large ribosomal subunit protein uL3 from Marinomonas sp. (strain MWYL1).